A 587-amino-acid chain; its full sequence is Bifunctional dihydrofolate reductase-thymidylate synthase (587 aa).

Positions 9 to 237 (DIYAICACCK…TTLDFIIYSK (229 aa)) constitute a DHFR domain. 36-42 (GIGNAGV) contributes to the NADP(+) binding site. Aspartate 51 is a binding site for substrate. NADP(+)-binding positions include 108–110 (KKS) and 129–132 (LSRT). Isoleucine 173, tyrosine 179, and threonine 194 together coordinate substrate. 174–181 (GGSSVYKE) provides a ligand contact to NADP(+). A thymidylate synthase region spans residues 301–587 (NHPEYQYLNI…HDKINMDMAA (287 aa)). Arginine 324 contacts dUMP. Residue cysteine 469 is part of the active site. DUMP contacts are provided by residues histidine 470, 488–492 (QRSCD), asparagine 500, and 530–532 (HVY).

The protein in the N-terminal section; belongs to the dihydrofolate reductase family. In the C-terminal section; belongs to the thymidylate synthase family. As to quaternary structure, homodimer.

The catalysed reaction is (6S)-5,6,7,8-tetrahydrofolate + NADP(+) = 7,8-dihydrofolate + NADPH + H(+). The enzyme catalyses dUMP + (6R)-5,10-methylene-5,6,7,8-tetrahydrofolate = 7,8-dihydrofolate + dTMP. Its pathway is cofactor biosynthesis; tetrahydrofolate biosynthesis; 5,6,7,8-tetrahydrofolate from 7,8-dihydrofolate: step 1/1. Functionally, bifunctional enzyme. Involved in de novo dTMP biosynthesis. Key enzyme in folate metabolism. Catalyzes an essential reaction for de novo glycine and purine synthesis, DNA precursor synthesis, and for the conversion of dUMP to dTMP. The polypeptide is Bifunctional dihydrofolate reductase-thymidylate synthase (Plasmodium berghei (strain Anka)).